Here is a 30-residue protein sequence, read N- to C-terminus: Trypsin inhibitor 3 (30 aa).

3 disulfide bridges follow: Cys4/Cys21, Cys11/Cys23, and Cys17/Cys29.

This sequence belongs to the protease inhibitor I7 (squash-type serine protease inhibitor) family.

The protein resides in the secreted. Inhibits lysyl endopeptidase and trypsin. This Cucumis melo var. conomon (Oriental pickling melon) protein is Trypsin inhibitor 3.